Reading from the N-terminus, the 243-residue chain is Ribosomal RNA small subunit methyltransferase J (243 aa).

S-adenosyl-L-methionine is bound by residues 112 to 113 and Asp-164; that span reads ER.

The protein belongs to the methyltransferase superfamily. RsmJ family.

The protein resides in the cytoplasm. It catalyses the reaction guanosine(1516) in 16S rRNA + S-adenosyl-L-methionine = N(2)-methylguanosine(1516) in 16S rRNA + S-adenosyl-L-homocysteine + H(+). Functionally, specifically methylates the guanosine in position 1516 of 16S rRNA. This Legionella pneumophila subsp. pneumophila (strain Philadelphia 1 / ATCC 33152 / DSM 7513) protein is Ribosomal RNA small subunit methyltransferase J.